Reading from the N-terminus, the 542-residue chain is MTKYIFVTGGVLSSLGKGITAASIGTLLKHSGIQVGMLKIDPYINVDPGTMSPLEHGEVFVTKDGAETDLDIGNYERFLDTSYLKSSNFTTGQVYSAVIERERAGGYLGQTIQVIPHIVGEIVKRIKEAGEGHDILIVELGGTVGDIEGLPFMEAIRQMKHDDEVEGTFFVHVTLIPFIKAAGELKSKPTQHSVQELRRIGITPQMIIARSENALPKTFKKKLAMSCDVSSDSVIEALDAASIYDVPISFLRQNILKPISKELSLGELNPNMEKWDSLVKKIVQPQNRIVLGFVGKYLELKEAYKSLTEALIHAGAHLDTRVDIHWVDSEKIEERGAEALLGDCDSVLVAGGFGNRGVEGKIKAIEYARVNKIPYLGICLGMQLTLVEYARNVLGYEGANSIEFDENTPYPMIYLIDNFLDQSGNTQLRTHKSPMGGTLRLGEYPCDTLEGSIIRKAYHGEKTIHERHRHRYEANPTYRKALEDAGMIVTGESNGLIEAVEIKDHPWFLGVQFHPEFTSRLQTPNPSILAFVEATLAISQEE.

Positions 1 to 265 are amidoligase domain; it reads MTKYIFVTGG…LKPISKELSL (265 aa). Position 13 (serine 13) interacts with CTP. Serine 13 contacts UTP. Residues 14–19 and aspartate 71 each bind ATP; that span reads SLGKGI. Aspartate 71 and glutamate 139 together coordinate Mg(2+). CTP-binding positions include 146-148, 186-191, and lysine 222; these read DIE and KSKPTQ. UTP contacts are provided by residues 186–191 and lysine 222; that span reads KSKPTQ. The region spanning 290–541 is the Glutamine amidotransferase type-1 domain; it reads VLGFVGKYLE…VEATLAISQE (252 aa). Residue glycine 352 coordinates L-glutamine. The active-site Nucleophile; for glutamine hydrolysis is the cysteine 379. L-glutamine is bound by residues 380–383, glutamate 403, and arginine 471; that span reads LGMQ. Residues histidine 514 and glutamate 516 contribute to the active site.

Belongs to the CTP synthase family. Homotetramer.

It carries out the reaction UTP + L-glutamine + ATP + H2O = CTP + L-glutamate + ADP + phosphate + 2 H(+). The enzyme catalyses L-glutamine + H2O = L-glutamate + NH4(+). It catalyses the reaction UTP + NH4(+) + ATP = CTP + ADP + phosphate + 2 H(+). Its pathway is pyrimidine metabolism; CTP biosynthesis via de novo pathway; CTP from UDP: step 2/2. With respect to regulation, allosterically activated by GTP, when glutamine is the substrate; GTP has no effect on the reaction when ammonia is the substrate. The allosteric effector GTP functions by stabilizing the protein conformation that binds the tetrahedral intermediate(s) formed during glutamine hydrolysis. Inhibited by the product CTP, via allosteric rather than competitive inhibition. Functionally, catalyzes the ATP-dependent amination of UTP to CTP with either L-glutamine or ammonia as the source of nitrogen. Regulates intracellular CTP levels through interactions with the four ribonucleotide triphosphates. The sequence is that of CTP synthase from Sulfurimonas denitrificans (strain ATCC 33889 / DSM 1251) (Thiomicrospira denitrificans (strain ATCC 33889 / DSM 1251)).